A 290-amino-acid polypeptide reads, in one-letter code: GTPase Era (290 aa).

The Era-type G domain maps to 2 to 144 (KVLKVGVLGP…AIILEEFKPQ (143 aa)). The segment at 10-17 (GPTNAGKS) is G1. 10–17 (GPTNAGKS) serves as a coordination point for GTP. Residues 36-40 (NTTLL) form a G2 region. Residues 58–61 (DVPG) are G3. 58-62 (DVPGF) is a GTP binding site. Residues 97-100 (NKIE) are G4. The tract at residues 121–123 (INK) is G5. 122–125 (NKFH) lines the GTP pocket. Residues 201–279 (CKNEIPHIAR…FIDIFVKTEK (79 aa)) form the KH type-2 domain.

It belongs to the TRAFAC class TrmE-Era-EngA-EngB-Septin-like GTPase superfamily. Era GTPase family. In terms of assembly, monomer.

The protein resides in the cytoplasm. Its subcellular location is the cell membrane. Functionally, an essential GTPase that binds both GDP and GTP, with rapid nucleotide exchange. Plays a role in 16S rRNA processing and 30S ribosomal subunit biogenesis and possibly also in cell cycle regulation and energy metabolism. This is GTPase Era from Mycoplasma genitalium (strain ATCC 33530 / DSM 19775 / NCTC 10195 / G37) (Mycoplasmoides genitalium).